Reading from the N-terminus, the 88-residue chain is Apolipoprotein C-I (88 aa).

Residues 1–26 (MRLLISLPVLIVVLAMALEGPAPAQA) form the signal peptide.

Belongs to the apolipoprotein C1 family.

The protein localises to the secreted. Inhibitor of lipoprotein binding to the low density lipoprotein (LDL) receptor, LDL receptor-related protein, and very low density lipoprotein (VLDL) receptor. Associates with high density lipoproteins (HDL) and the triacylglycerol-rich lipoproteins in the plasma and makes up about 10% of the protein of the VLDL and 2% of that of HDL. Appears to interfere directly with fatty acid uptake and is also the major plasma inhibitor of cholesteryl ester transfer protein (CETP). Modulates the interaction of APOE with beta-migrating VLDL and inhibits binding of beta-VLDL to the LDL receptor-related protein. Binds free fatty acids and reduces their intracellular esterification. The polypeptide is Apolipoprotein C-I (APOC1) (Mesocricetus auratus (Golden hamster)).